Consider the following 638-residue polypeptide: Intron-encoded RNA maturase bI4 (638 aa).

Residues 1–253 (MAFRKSNVYL…VFYSPNTLGQ (253 aa)) are COB exons 1 to 4 encoded. The segment at 253–638 (QNMALLLITY…LKFNEKWNNN (386 aa)) is COB intron 4 encoded.

It in the C-terminal section; belongs to the LAGLIDADG endonuclease family. In terms of assembly, forms a ternary complex with intron derived RNA and the imported mitochondrial leucyl-tRNA synthetase NAM2. The proteins do not interact directly with each other. Post-translationally, the mature protein may arise from proteolytic cleavage of an in-frame translation of COB exons 1 to 4 plus intron 4, containing the bI4 open reading frame. Cleavage would take place close to the Met-385 resulting in an active maturase of about 30 kDa.

It is found in the mitochondrion. In terms of biological role, mitochondrial mRNA maturase required for splicing of intron 4 of the cytochrome b (COB) gene, containing its own coding sequence, and intron 4 in COX1, coding for the related homing endonuclease aI4. In vivo splicing requires in addition the imported mitochondrial leucyl-tRNA synthetase NAM2. Both proteins seem to stimulate the intrinsic ribozyme activity of intron bI4 through binding to and stabilizing specific secondary and tertiary structure elements in the RNA. In Saccharomyces cerevisiae (strain ATCC 204508 / S288c) (Baker's yeast), this protein is Intron-encoded RNA maturase bI4 (BI4).